Here is a 437-residue protein sequence, read N- to C-terminus: Probable N-acetylmuramidase (437 aa).

Positions 1-57 (MPVSRVKVKNRHLKKKTKKPLAFYKPATKFAGAVLIAGTLTTTHELLLQQTSPMVQA) are cleaved as a signal peptide. 3 disordered regions span residues 217-244 (SSAG…SSTT), 290-320 (ASST…SQTT), and 367-392 (AASN…NSNA). The LysM 1 domain maps to 243 to 286 (TTYTVKSGDTLWGISQRYGISVAQIQSANNLKSTIIYIGQKLVL). Positions 290-317 (ASSTNSGGSNNSASTTPTTSVTPAKPTS) are enriched in low complexity. The LysM 2 domain maps to 319 to 362 (TTVKVKSGDTLWALSVKYKTSIAQLKSWNHLSSDTIYIGQNLIV). One can recognise a LysM 3 domain in the interval 393 to 436 (SIHKVVKGDTLWGLSQKSGSPIASIKAWNHLSSDTILIGQYLRI).

It belongs to the glycosyl hydrolase 73 family.

The protein resides in the secreted. The enzyme catalyses Hydrolysis of (1-&gt;4)-beta-linkages between N-acetylmuramic acid and N-acetyl-D-glucosamine residues in a peptidoglycan and between N-acetyl-D-glucosamine residues in chitodextrins.. Its function is as follows. Hydrolyzes the cell wall of L.lactis and M.lysodeikticus. Required for cell separation during growth. In Lactococcus lactis subsp. cremoris (strain MG1363), this protein is Probable N-acetylmuramidase (acmA).